The chain runs to 573 residues: Glutamate--tRNA ligase (573 aa).

The 'HIGH' region signature appears at 106-116; sequence PNPDGAFHLGN.

It belongs to the class-I aminoacyl-tRNA synthetase family. Glutamate--tRNA ligase type 2 subfamily.

It localises to the cytoplasm. It catalyses the reaction tRNA(Glu) + L-glutamate + ATP = L-glutamyl-tRNA(Glu) + AMP + diphosphate. Its function is as follows. Catalyzes the attachment of glutamate to tRNA(Glu) in a two-step reaction: glutamate is first activated by ATP to form Glu-AMP and then transferred to the acceptor end of tRNA(Glu). The sequence is that of Glutamate--tRNA ligase from Thermococcus onnurineus (strain NA1).